A 489-amino-acid chain; its full sequence is Probable apyrase 1 (489 aa).

Residues 1 to 28 (MRRFSAAAGARQQQQQGEAVSDRVLRFR) are Cytoplasmic-facing. Residues 29–49 (GVLVVVLAPVLLISLVLLLMP) form a helical; Signal-anchor for type II membrane protein membrane-spanning segment. The Extracellular portion of the chain corresponds to 50–489 (RAPASATVEG…GSAIEVASSS (440 aa)). 89 to 99 (VIFDAGSSGSR) serves as a coordination point for ATP. The Proton acceptor role is filled by glutamate 211. 235–245 (GVVDLGGGSVQ) contributes to the ATP binding site.

Belongs to the GDA1/CD39 NTPase family. Ca(2+) is required as a cofactor.

It localises to the membrane. The catalysed reaction is a ribonucleoside 5'-triphosphate + 2 H2O = a ribonucleoside 5'-phosphate + 2 phosphate + 2 H(+). Its function is as follows. Catalyzes the hydrolysis of phosphoanhydride bonds of nucleoside tri- and di-phosphates. This Oryza sativa subsp. japonica (Rice) protein is Probable apyrase 1 (APY1).